Consider the following 197-residue polypeptide: Small ribosomal subunit protein uS4B (197 aa).

The S4 RNA-binding domain occupies 88 to 151 (CRLDNIAYRI…RKNDEFADNF (64 aa)).

Belongs to the universal ribosomal protein uS4 family. In terms of assembly, part of the 30S ribosomal subunit. Contacts protein S5. The interaction surface between S4 and S5 is involved in control of translational fidelity.

In terms of biological role, one of the primary rRNA binding proteins, it binds directly to 16S rRNA where it nucleates assembly of the body of the 30S subunit. With S5 and S12 plays an important role in translational accuracy. This chain is Small ribosomal subunit protein uS4B, found in Clostridium botulinum (strain Hall / ATCC 3502 / NCTC 13319 / Type A).